Here is a 196-residue protein sequence, read N- to C-terminus: Lipoprotein signal peptidase (196 aa).

Helical transmembrane passes span 75–95 (IVFLITNTIIVCYLYYLMMSS) and 97–117 (TIGGFAGYSFVIGGAIGNLID). Active-site residues include Asp126 and Asp144. A helical membrane pass occupies residues 135 to 155 (YSFPVFNLADCFITLGVIILV).

Belongs to the peptidase A8 family.

It is found in the cell inner membrane. The catalysed reaction is Release of signal peptides from bacterial membrane prolipoproteins. Hydrolyzes -Xaa-Yaa-Zaa-|-(S,diacylglyceryl)Cys-, in which Xaa is hydrophobic (preferably Leu), and Yaa (Ala or Ser) and Zaa (Gly or Ala) have small, neutral side chains.. It functions in the pathway protein modification; lipoprotein biosynthesis (signal peptide cleavage). Its function is as follows. This protein specifically catalyzes the removal of signal peptides from prolipoproteins. In Rickettsia bellii (strain OSU 85-389), this protein is Lipoprotein signal peptidase.